A 142-amino-acid chain; its full sequence is Large ribosomal subunit protein uL13 (142 aa).

Belongs to the universal ribosomal protein uL13 family. In terms of assembly, part of the 50S ribosomal subunit.

In terms of biological role, this protein is one of the early assembly proteins of the 50S ribosomal subunit, although it is not seen to bind rRNA by itself. It is important during the early stages of 50S assembly. The protein is Large ribosomal subunit protein uL13 of Francisella philomiragia subsp. philomiragia (strain ATCC 25017 / CCUG 19701 / FSC 153 / O#319-036).